The chain runs to 769 residues: Homoaconitase, mitochondrial (769 aa).

The transit peptide at 1 to 28 directs the protein to the mitochondrion; the sequence is MQSRLLPSGPGRRWISLRVPNTPQRRAF. Positions 391, 460, and 463 each coordinate [4Fe-4S] cluster.

Belongs to the aconitase/IPM isomerase family. [4Fe-4S] cluster is required as a cofactor.

It is found in the mitochondrion. The catalysed reaction is (2R,3S)-homoisocitrate = cis-homoaconitate + H2O. The protein operates within amino-acid biosynthesis; L-lysine biosynthesis via AAA pathway; L-alpha-aminoadipate from 2-oxoglutarate: step 3/5. Functionally, catalyzes the reversible hydration of cis-homoaconitate to (2R,3S)-homoisocitrate, a step in the alpha-aminoadipate pathway for lysine biosynthesis. This chain is Homoaconitase, mitochondrial (lysA), found in Aspergillus niger (strain ATCC MYA-4892 / CBS 513.88 / FGSC A1513).